The following is a 411-amino-acid chain: MNALAATSRNFRQAARLLGLDSKLQKSLLIPLREIKVECTIPKDDGTLATFVGFRVQHDNSRGPMKGGIRYHPEVDPDEVNALAQLMTWKTAVAAVPYGGAKGGIGCTPGELSRSELERLTRVFTQKIHDLIGINTDVPAPDMGTNAQTMAWILDEYSKFHGHSPAVVTGKPIDLGGSLGRDAATGRGVMYATEALLTEYSESISGSTFVIQGLGNVGSWAAKLIHQKGGKIVAVGDVTGAIRNKSGIDIPALLKHRSEGGSLEDFYGAEVMDAAELLVHECDVLVPCALGGVLNRENAAEVKARFIIEGANHPTDTEADEILAKKGVIVLPDIYANSGGVVVSYFEWVQNIQGFMWDEEKVNRELQKYMKNAFQNIKDMCKSQNCNLRMGAFTLGVNRVAKATLLRGWEA.

Residues M1 to L18 constitute a mitochondrion transit peptide. K102 is a catalytic residue.

It belongs to the Glu/Leu/Phe/Val dehydrogenases family. In terms of tissue distribution, barely expressed in leaves, spikelets and roots. Glumes and stamens specific accumulation.

The protein resides in the mitochondrion. It carries out the reaction L-glutamate + NAD(+) + H2O = 2-oxoglutarate + NH4(+) + NADH + H(+). It catalyses the reaction L-glutamate + NADP(+) + H2O = 2-oxoglutarate + NH4(+) + NADPH + H(+). This is Glutamate dehydrogenase 3, mitochondrial (GDH3) from Oryza sativa subsp. japonica (Rice).